The sequence spans 283 residues: Mau operon transcriptional activator (283 aa).

The 58-residue stretch at 1 to 58 (MNWDDLRVVAAINRCGSFNRAAKMLNVEETTIARRLARLEGSLGCVLFQAVDGQRRPT) folds into the HTH lysR-type domain. The H-T-H motif DNA-binding region spans 18–37 (FNRAAKMLNVEETTIARRLA).

Belongs to the LysR transcriptional regulatory family.

Functionally, transcriptional activator of the mau genes involved in methylamine metabolism. The protein is Mau operon transcriptional activator (mauR) of Paracoccus denitrificans.